A 110-amino-acid chain; its full sequence is UPF0060 membrane protein Veis_0342 (110 aa).

Transmembrane regions (helical) follow at residues 8–28 (VLFT…WLVI), 33–53 (PLWL…LLTL), 63–83 (AAYG…VDGV), and 90–110 (VAGA…PASA).

Belongs to the UPF0060 family.

Its subcellular location is the cell inner membrane. The protein is UPF0060 membrane protein Veis_0342 of Verminephrobacter eiseniae (strain EF01-2).